Reading from the N-terminus, the 99-residue chain is Large ribosomal subunit protein uL23 (99 aa).

This sequence belongs to the universal ribosomal protein uL23 family. As to quaternary structure, part of the 50S ribosomal subunit. Contacts protein L29, and trigger factor when it is bound to the ribosome.

Its function is as follows. One of the early assembly proteins it binds 23S rRNA. One of the proteins that surrounds the polypeptide exit tunnel on the outside of the ribosome. Forms the main docking site for trigger factor binding to the ribosome. The sequence is that of Large ribosomal subunit protein uL23 from Azotobacter vinelandii (strain DJ / ATCC BAA-1303).